The chain runs to 463 residues: Quinolone resistance protein NorB (463 aa).

The next 14 membrane-spanning stretches (helical) occupy residues 17 to 37 (IGIV…VNVV), 53 to 73 (IAVS…GGLA), 86 to 106 (IILN…LLLI), 107 to 127 (IGRL…LSII), 142 to 162 (YWSI…GAVA), 165 to 185 (LGWR…LFLI), 201 to 221 (FDIK…ILIT), 230 to 250 (SLLF…FIVL), 273 to 293 (TASN…NTFV), 299 to 319 (YSSL…LIMI), 334 to 354 (PMLI…LTFL), 357 to 377 (ILYV…LGIY), 403 to 423 (MASA…YAIV), and 435 to 455 (IALW…LLLV).

This sequence belongs to the major facilitator superfamily. TCR/Tet family.

The protein resides in the cell membrane. In terms of biological role, multidrug efflux pump that acts independently of NorA and is one of the factors that confers resistance against diverse quinolones and chemical compounds. This is Quinolone resistance protein NorB (norB) from Staphylococcus aureus (strain MSSA476).